Here is a 499-residue protein sequence, read N- to C-terminus: MPDVVNVGFVPMATSARGVLFVFCDDALKFGPDTVKALGTAANAVKRAAATSQFKGKSGSTLDILAPEGLKAVRLVVIGAGKLAAIKDHDFLKLGGVLAGKIGGGKEAVTVIAELPTGAMTPAQGAAVAAGVRMRAYKFDRYKTKKKDGEDTPLNASVAIAVRDVAAAKKAFAPQNHVVDGVIMARELVNEPPNVLFPVEFARRASQLRKLGVGVEVLDVPAMKRLKMGALLGVSQGSTQPGRTVIMRWNGGKKGEQPVAFVGKGVCFDTGGISIKPSGSMEDMKGDMGGAACVVGLMHALAARKAKINVVGAIGLVENMPDGNAQRPGDIVTSMSGQTIEIINTDAEGRLVLADVLWYVAKKHKPKFMVDLATLTGAILVALGTEYAGLFSNNDQLSERLTEAGQATGERVWRLPMGPEYDKMMDSQFADMKNAGARHGGSITAAQFLQRFVDDTPWAHLDIAGTAMGAPKTDINQSWGSGYGVRLLDRLVADYYESK.

Residues Lys-264 and Asp-269 each coordinate Mn(2+). The active site involves Lys-276. Mn(2+) is bound by residues Asp-287, Asp-346, and Glu-348. The active site involves Arg-350.

Belongs to the peptidase M17 family. It depends on Mn(2+) as a cofactor.

It is found in the cytoplasm. It carries out the reaction Release of an N-terminal amino acid, Xaa-|-Yaa-, in which Xaa is preferably Leu, but may be other amino acids including Pro although not Arg or Lys, and Yaa may be Pro. Amino acid amides and methyl esters are also readily hydrolyzed, but rates on arylamides are exceedingly low.. The enzyme catalyses Release of an N-terminal amino acid, preferentially leucine, but not glutamic or aspartic acids.. Functionally, presumably involved in the processing and regular turnover of intracellular proteins. Catalyzes the removal of unsubstituted N-terminal amino acids from various peptides. The sequence is that of Probable cytosol aminopeptidase from Rhodopseudomonas palustris (strain BisB18).